A 310-amino-acid chain; its full sequence is Protoheme IX farnesyltransferase (310 aa).

9 helical membrane passes run 21–43 (LLKPRVMSLVVFTALVGLLVAPV), 48–70 (MIALTGILFIALGAGASGALNMW), 95–115 (GEALGIGLALSGIAVVMLGLA), 118–138 (LFAAGLLAFTIFFYAVVYSMW), 147–167 (IVIGGAAGAFPPMIGWAVATG), 174–194 (LFMFALIFMWTPPHFWSLALF), 220–240 (VLVYSLLLAPLAVAGAFTGIG), 243–263 (LYLATALALNGWLLVGAVRIW), and 289–309 (LFLHFGAILAEAALKPYGLGG).

It belongs to the UbiA prenyltransferase family. Protoheme IX farnesyltransferase subfamily. As to quaternary structure, interacts with CtaA.

It localises to the cell inner membrane. It catalyses the reaction heme b + (2E,6E)-farnesyl diphosphate + H2O = Fe(II)-heme o + diphosphate. Its pathway is porphyrin-containing compound metabolism; heme O biosynthesis; heme O from protoheme: step 1/1. Its function is as follows. Converts heme B (protoheme IX) to heme O by substitution of the vinyl group on carbon 2 of heme B porphyrin ring with a hydroxyethyl farnesyl side group. This chain is Protoheme IX farnesyltransferase, found in Cereibacter sphaeroides (strain KD131 / KCTC 12085) (Rhodobacter sphaeroides).